The chain runs to 160 residues: Ribosomal RNA large subunit methyltransferase H (160 aa).

S-adenosyl-L-methionine-binding positions include L77, G109, and 128-133 (FSRLTF).

This sequence belongs to the RNA methyltransferase RlmH family. Homodimer.

The protein resides in the cytoplasm. The enzyme catalyses pseudouridine(1915) in 23S rRNA + S-adenosyl-L-methionine = N(3)-methylpseudouridine(1915) in 23S rRNA + S-adenosyl-L-homocysteine + H(+). In terms of biological role, specifically methylates the pseudouridine at position 1915 (m3Psi1915) in 23S rRNA. This is Ribosomal RNA large subunit methyltransferase H from Desulfitobacterium hafniense (strain DSM 10664 / DCB-2).